Here is a 251-residue protein sequence, read N- to C-terminus: Phosphate import ATP-binding protein PstB (251 aa).

The 242-residue stretch at 5–246 (IKIRGVNFFY…PKDKRTEDYI (242 aa)) folds into the ABC transporter domain. 37-44 (GPSGCGKS) serves as a coordination point for ATP.

This sequence belongs to the ABC transporter superfamily. Phosphate importer (TC 3.A.1.7) family. In terms of assembly, the complex is composed of two ATP-binding proteins (PstB), two transmembrane proteins (PstC and PstA) and a solute-binding protein (PstS).

It localises to the cell membrane. It carries out the reaction phosphate(out) + ATP + H2O = ADP + 2 phosphate(in) + H(+). In terms of biological role, part of the ABC transporter complex PstSACB involved in phosphate import. Responsible for energy coupling to the transport system. In Dehalococcoides mccartyi (strain ATCC BAA-2266 / KCTC 15142 / 195) (Dehalococcoides ethenogenes (strain 195)), this protein is Phosphate import ATP-binding protein PstB.